Reading from the N-terminus, the 181-residue chain is Oligoribonuclease (181 aa).

Residues leucine 8 to methionine 171 form the Exonuclease domain. Tyrosine 129 is a catalytic residue.

The protein belongs to the oligoribonuclease family.

It is found in the cytoplasm. Its function is as follows. 3'-to-5' exoribonuclease specific for small oligoribonucleotides. This is Oligoribonuclease from Chromobacterium violaceum (strain ATCC 12472 / DSM 30191 / JCM 1249 / CCUG 213 / NBRC 12614 / NCIMB 9131 / NCTC 9757 / MK).